The primary structure comprises 756 residues: Pro-neuregulin-2, membrane-bound isoform (756 aa).

The propeptide occupies 1-19 (MRRDPAPGFSMLLFGVSLA). Over 20–315 (CYSPSLKSVQ…KEAEELYQKR (296 aa)) the chain is Extracellular. Asparagine 55, asparagine 186, and asparagine 254 each carry an N-linked (GlcNAc...) asparagine glycan. In terms of domain architecture, Ig-like C2-type spans 145–240 (PKLKKMKSQT…RGRLHVNSVS (96 aa)). 4 disulfides stabilise this stretch: cysteine 165-cysteine 219, cysteine 253-cysteine 267, cysteine 261-cysteine 278, and cysteine 280-cysteine 289. Positions 249 to 290 (HARKCNETAKSYCVNGGVCYYIEGINQLSCKCPVGYTGDRCQ) constitute an EGF-like domain. A glycan (N-linked (GlcNAc...) asparagine) is linked at asparagine 296. Residues 316–336 (VLTITGICVALLVVGIVCVVA) traverse the membrane as a helical segment. The Cytoplasmic portion of the chain corresponds to 337-756 (YCKTKKQRRQ…TRAKQDSGPL (420 aa)). 4 disordered regions span residues 402–439 (TFSG…SESL), 557–578 (LLRH…DMQR), 608–694 (ASPF…DGAL), and 711–756 (LRSD…SGPL). Residues 404–416 (SGSHSCSPSHHCS) are compositionally biased toward low complexity. The segment covering 424 to 437 (HRHESHTWSLERSE) has biased composition (basic and acidic residues). Residues 654 to 682 (LNGLAAQRARAARDSLSLSSGSGCGSASA) are compositionally biased toward low complexity.

This sequence belongs to the neuregulin family. Interacts with ERBB3 and ERBB4. Post-translationally, proteolytic cleavage close to the plasma membrane on the external face leads to the release of the soluble growth factor form. Extensive glycosylation precedes the proteolytic cleavage. As to expression, highest expression in the brain, with lower levels in the lung. In the cerebellum, found in granule and Purkinje cells.

It localises to the cell membrane. Its subcellular location is the secreted. Its function is as follows. Direct ligand for ERBB3 and ERBB4 tyrosine kinase receptors. Concomitantly recruits ERBB1 and ERBB2 coreceptors, resulting in ligand-stimulated tyrosine phosphorylation and activation of the ERBB receptors. May also promote the heterodimerization with the EGF receptor. The chain is Pro-neuregulin-2, membrane-bound isoform (Nrg2) from Mus musculus (Mouse).